Reading from the N-terminus, the 275-residue chain is Structure-specific endonuclease subunit SLX1 (275 aa).

The GIY-YIG domain maps to 12 to 95 (RFFGVYLLYC…QHPHASRRLA (84 aa)). Positions 148 to 161 (HVPLAFGPPPPQAP) are enriched in pro residues. Residues 148-179 (HVPLAFGPPPPQAPAPRRRAGPFDDAEPEPDQ) are disordered. Residues 186-238 (CSLCAQTIQDEEGPLCCPHPGCLLRAHVICLAEEFLQEEPGQLLPLEGQCPCC) form an SLX1-type zinc finger.

This sequence belongs to the SLX1 family. In terms of assembly, forms a heterodimer with SLX4. Requires a divalent metal cation as cofactor.

It is found in the nucleus. In terms of biological role, catalytic subunit of the SLX1-SLX4 structure-specific endonuclease that resolves DNA secondary structures generated during DNA repair and recombination. Has endonuclease activity towards branched DNA substrates, introducing single-strand cuts in duplex DNA close to junctions with ss-DNA. Has a preference for 5'-flap structures, and promotes symmetrical cleavage of static and migrating Holliday junctions (HJs). Resolves HJs by generating two pairs of ligatable, nicked duplex products. This is Structure-specific endonuclease subunit SLX1 from Homo sapiens (Human).